We begin with the raw amino-acid sequence, 607 residues long: Major facilitator superfamily multidrug transporter mdrA (607 aa).

A run of 12 helical transmembrane segments spans residues 77–97, 110–130, 139–159, 170–190, 202–222, 229–249, 305–325, 342–362, 385–405, 413–433, 443–463, and 478–498; these read MTVA…TGGV, VATL…LLWA, QIIF…SAGA, FFAG…IADM, LFAA…GFLG, WVMG…TIFV, PIVF…YMLF, VSSL…TYSV, LPPT…FAWT, IVCI…FLGI, IFAA…GAVF, and WASS…FLFY. The interval 523 to 583 is disordered; it reads EQMKQAPEPE…ASTRTASSLR (61 aa). The segment covering 553–564 has biased composition (acidic residues); that stretch reads DVSETESNVEEL. The segment covering 572 to 583 has biased composition (low complexity); the sequence is SRASTRTASSLR.

The protein belongs to the major facilitator superfamily. DHA1 family. Polyamines/proton antiporter (TC 2.A.1.2.16) subfamily.

It localises to the cell membrane. MFS transporter involved in the basal level of azole susceptibility. Confers resistance to voriconazole and, to a lesser extent, to fluconazole. The chain is Major facilitator superfamily multidrug transporter mdrA from Aspergillus fumigatus (strain ATCC MYA-4609 / CBS 101355 / FGSC A1100 / Af293) (Neosartorya fumigata).